The primary structure comprises 67 residues: MPKLKTKSGAKKRFKVTGTGKVVYAQAGKRHGMIKRTNKQIRNLRGTTTLFEGDAANVKKYFLPNQR.

The protein belongs to the bacterial ribosomal protein bL35 family.

The sequence is that of Large ribosomal subunit protein bL35 from Methylorubrum populi (strain ATCC BAA-705 / NCIMB 13946 / BJ001) (Methylobacterium populi).